Consider the following 134-residue polypeptide: ATP synthase epsilon chain (134 aa).

The protein belongs to the ATPase epsilon chain family. F-type ATPases have 2 components, CF(1) - the catalytic core - and CF(0) - the membrane proton channel. CF(1) has five subunits: alpha(3), beta(3), gamma(1), delta(1), epsilon(1). CF(0) has three main subunits: a, b and c.

It localises to the cell membrane. Functionally, produces ATP from ADP in the presence of a proton gradient across the membrane. The sequence is that of ATP synthase epsilon chain from Listeria welshimeri serovar 6b (strain ATCC 35897 / DSM 20650 / CCUG 15529 / CIP 8149 / NCTC 11857 / SLCC 5334 / V8).